The chain runs to 141 residues: MEMFQGLLLWLLLGVAGVWASRGPLRPLCQPINATLAAEKEACPVCITFTTSICAGYCPSMKRVLPVILPPMPQRVCTYHELRFASVRLPGCPPGVDPMVSFPVALSCHCGPCRLSSTDCGGPRTQPLACDHPPLPDILFL.

A signal peptide spans 1 to 20 (MEMFQGLLLWLLLGVAGVWA). 6 disulfide bridges follow: cysteine 29–cysteine 77, cysteine 43–cysteine 92, cysteine 46–cysteine 130, cysteine 54–cysteine 108, cysteine 58–cysteine 110, and cysteine 113–cysteine 120. Asparagine 33 carries N-linked (GlcNAc...) asparagine glycosylation.

The protein belongs to the glycoprotein hormones subunit beta family. As to quaternary structure, heterodimer of a common alpha chain and a unique beta chain which confers biological specificity to thyrotropin, lutropin, follitropin and gonadotropin.

Its subcellular location is the secreted. Functionally, promotes spermatogenesis and ovulation by stimulating the testes and ovaries to synthesize steroids. The chain is Lutropin subunit beta (LHB) from Bos taurus (Bovine).